The sequence spans 899 residues: Suppressor of glycerol defect protein 1 (899 aa).

Residues 24–33 (QDERFSISEG) show a composition bias toward basic and acidic residues. Disordered stretches follow at residues 24–181 (QDER…VSYP) and 248–326 (ETNS…DDSE). The span at 34 to 49 (KKRRRGNGKHLSRKEK) shows a compositional bias: basic residues. A compositionally biased stretch (polar residues) spans 65 to 77 (REINSSRLKSAPT). Residues 103-126 (DESESNENWDSDEVLTDEVAEESG) show a composition bias toward acidic residues. Basic and acidic residues-rich tracts occupy residues 134–143 (ETMKKLESLK), 162–174 (SYEK…RDTN), and 251–264 (SMRK…KAFS). Residues 265–292 (SDDDLSASDFEDSDGLSESDNDSVADSD) show a composition bias toward acidic residues. The 206-residue stretch at 335–540 (SKKVNSSLNK…DTMSDLKNNR (206 aa)) folds into the MIF4G domain. Residues 644 to 781 (DIRRAIFISI…KLDVFKHVPF (138 aa)) enclose the MI domain. The residue at position 736 (S736) is a Phosphoserine.

It belongs to the CWC22 family. As to quaternary structure, interacts with PLC1.

Its subcellular location is the nucleus. It is found in the nucleolus. Involved in osmoregulatory glycerol response, probably through its interaction with PLC1 which regulates the expression of GDP1. This Saccharomyces cerevisiae (strain ATCC 204508 / S288c) (Baker's yeast) protein is Suppressor of glycerol defect protein 1 (SGD1).